Consider the following 311-residue polypeptide: Mediator of RNA polymerase II transcription subunit 27-B (311 aa).

Belongs to the Mediator complex subunit 27 family. In terms of assembly, component of the Mediator complex.

The protein resides in the nucleus. In terms of biological role, component of the Mediator complex, a coactivator involved in the regulated transcription of nearly all RNA polymerase II-dependent genes. Mediator functions as a bridge to convey information from gene-specific regulatory proteins to the basal RNA polymerase II transcription machinery. Mediator is recruited to promoters by direct interactions with regulatory proteins and serves as a scaffold for the assembly of a functional preinitiation complex with RNA polymerase II and the general transcription factors. This chain is Mediator of RNA polymerase II transcription subunit 27-B (med27-b), found in Xenopus laevis (African clawed frog).